A 332-amino-acid polypeptide reads, in one-letter code: UDP-3-O-acylglucosamine N-acyltransferase (332 aa).

The active-site Proton acceptor is the His-235.

This sequence belongs to the transferase hexapeptide repeat family. LpxD subfamily. As to quaternary structure, homotrimer.

The enzyme catalyses a UDP-3-O-[(3R)-3-hydroxyacyl]-alpha-D-glucosamine + a (3R)-hydroxyacyl-[ACP] = a UDP-2-N,3-O-bis[(3R)-3-hydroxyacyl]-alpha-D-glucosamine + holo-[ACP] + H(+). It functions in the pathway bacterial outer membrane biogenesis; LPS lipid A biosynthesis. Catalyzes the N-acylation of UDP-3-O-acylglucosamine using 3-hydroxyacyl-ACP as the acyl donor. Is involved in the biosynthesis of lipid A, a phosphorylated glycolipid that anchors the lipopolysaccharide to the outer membrane of the cell. This Fusobacterium nucleatum subsp. nucleatum (strain ATCC 25586 / DSM 15643 / BCRC 10681 / CIP 101130 / JCM 8532 / KCTC 2640 / LMG 13131 / VPI 4355) protein is UDP-3-O-acylglucosamine N-acyltransferase.